Reading from the N-terminus, the 309-residue chain is MPRHCSAAGCCTRDTRETRNRGISFHRLPKKDNPRRGLWLANCQRLDPSGQGLWDPASEYIYFCSKHFEEDCFELVGISGYHRLKEGAVPTIFESFSKLRRTTKTKGHSYPPGPAEVSRLRRCRKRCSEGRGPTTPFSPPPPADVTCFPVEEASAPATLPASPAGRLEPGLSSPFSDLLGPLGAQADEAGCSAQPSPERQPSPLEPRPVSPSAYMLRLPPPAGAYIQNEHSYQVGSALLWKRRAEAALDALDKAQRQLQACKRREQRLRLRLTKLQQERAREKRAQADARQTLKEHVQDFAMQLSSSMA.

A THAP-type zinc finger spans residues 1 to 93 (MPRHCSAAGC…LKEGAVPTIF (93 aa)). The disordered stretch occupies residues 158 to 209 (TLPASPAGRLEPGLSSPFSDLLGPLGAQADEAGCSAQPSPERQPSPLEPRPV). Residue Ser162 is modified to Phosphoserine. Residues 198–209 (ERQPSPLEPRPV) show a composition bias toward pro residues. A Phosphoserine modification is found at Ser210. The HCFC1-binding motif (HBM) motif lies at 229–232 (EHSY).

As to quaternary structure, forms homodimers. Interacts with HDAC3 and nuclear hormone receptor corepressors. Interacts via HBM with HCFC1.

It localises to the nucleus. The protein localises to the chromosome. Chromatin-associated, histone tail-binding protein that represses transcription via recruitment of HDAC3 and nuclear hormone receptor corepressors. This Homo sapiens (Human) protein is THAP domain-containing protein 7 (THAP7).